The sequence spans 439 residues: Tubulin beta chain (439 aa).

Residues glutamine 11, glutamate 69, serine 138, glycine 142, threonine 143, glycine 144, asparagine 204, and asparagine 226 each coordinate GTP. A Mg(2+)-binding site is contributed by glutamate 69.

It belongs to the tubulin family. Dimer of alpha and beta chains. A typical microtubule is a hollow water-filled tube with an outer diameter of 25 nm and an inner diameter of 15 nM. Alpha-beta heterodimers associate head-to-tail to form protofilaments running lengthwise along the microtubule wall with the beta-tubulin subunit facing the microtubule plus end conferring a structural polarity. Microtubules usually have 13 protofilaments but different protofilament numbers can be found in some organisms and specialized cells. Mg(2+) serves as cofactor.

Its subcellular location is the cytoplasm. It localises to the cytoskeleton. Functionally, tubulin is the major constituent of microtubules, a cylinder consisting of laterally associated linear protofilaments composed of alpha- and beta-tubulin heterodimers. Microtubules grow by the addition of GTP-tubulin dimers to the microtubule end, where a stabilizing cap forms. Below the cap, tubulin dimers are in GDP-bound state, owing to GTPase activity of alpha-tubulin. This chain is Tubulin beta chain (TUB2), found in Encephalitozoon cuniculi (strain GB-M1) (Microsporidian parasite).